Consider the following 212-residue polypeptide: Ribosomal RNA small subunit methyltransferase G (212 aa).

S-adenosyl-L-methionine-binding positions include Gly-72, Leu-77, 123-124 (VE), and Arg-138.

The protein belongs to the methyltransferase superfamily. RNA methyltransferase RsmG family.

The protein localises to the cytoplasm. It carries out the reaction guanosine(527) in 16S rRNA + S-adenosyl-L-methionine = N(7)-methylguanosine(527) in 16S rRNA + S-adenosyl-L-homocysteine. In terms of biological role, specifically methylates the N7 position of guanine in position 527 of 16S rRNA. The chain is Ribosomal RNA small subunit methyltransferase G from Histophilus somni (strain 129Pt) (Haemophilus somnus).